Here is a 479-residue protein sequence, read N- to C-terminus: MPEVPWVEKYRPRRLSEIINQEDAISKVKAWIEAWLHGNPPKKKALLLAGPPGSGKTTTVYALAREYNFEVIELNASDERTYDKIARYVQAAYTMDILGKRRKIIFLDEADNIEPSGAPEIAKLIDRARNPIIMAANHYWEVPKEIRDRAELVEYKRLTQRDVINALVRILKREGITVPKEVLVEIAKRASGDLRAAINDLQTVVAGGYEDARYVLAYRDVEKTVFQALGLVFASDNAKRAKLAMMNLDMSPDEFLLWIDENIPHMYLKPEEMARAYEAISKADIYLGRAQRTGNYSLWRYAIDMMTAGVAVAGTKKRGFAKFYPPNTLKMLAESKEERSTRNSIIKKIMSEMHMSKLEAIETMKIIKTIFEKNLDLAAHFTVFLGLSEKEVEFLAGRENAGTIWGKALAIRRKLKKEEEKIRKERKEEEKVEVREEKPEEKVEEKREERETKKEKEKKEEKKAEKKGKQVTLFDFIKK.

G50 to T57 is an ATP binding site. Positions E420–G468 are enriched in basic and acidic residues. Positions E420–K479 are disordered.

Belongs to the activator 1 small subunits family. RfcL subfamily. As to quaternary structure, heterohexamer composed of four small subunits (RfcS) and two large subunits (RfcL).

Its function is as follows. Part of the RFC clamp loader complex which loads the PCNA sliding clamp onto DNA. The complex possesses DNA-independent ATPase activity. The sequence is that of Replication factor C large subunit (rfcL) from Pyrococcus abyssi (strain GE5 / Orsay).